Reading from the N-terminus, the 236-residue chain is Small ribosomal subunit protein uS2c (236 aa).

The protein belongs to the universal ribosomal protein uS2 family.

It is found in the plastid. The protein resides in the chloroplast. This Oenothera parviflora (Small-flowered evening primrose) protein is Small ribosomal subunit protein uS2c (rps2).